The primary structure comprises 504 residues: Glucose-6-phosphate isomerase (504 aa).

The active-site Proton donor is glutamate 333. Active-site residues include histidine 364 and lysine 473.

Belongs to the GPI family.

It localises to the cytoplasm. The catalysed reaction is alpha-D-glucose 6-phosphate = beta-D-fructose 6-phosphate. The protein operates within carbohydrate biosynthesis; gluconeogenesis. It functions in the pathway carbohydrate degradation; glycolysis; D-glyceraldehyde 3-phosphate and glycerone phosphate from D-glucose: step 2/4. Catalyzes the reversible isomerization of glucose-6-phosphate to fructose-6-phosphate. The sequence is that of Glucose-6-phosphate isomerase from Xanthomonas oryzae pv. oryzae (strain KACC10331 / KXO85).